The primary structure comprises 258 residues: MAFNPLLSLLKADAIFLGQLSKSSFCATSRAFSVFYFTRFKRSAYVSAPFGIEPHDEKELKTIDDNVHSNNLSWQKIQEHEVIRELYRKAAYELPGLTPYTQSFKKPADSQIFRFESDVQMSSFEKMNPKVVVTFKVTNIPLLEEKQRHVLRLLVGPRYNPEEDLVRISSDKYSSALQNKYHLIKILTSLIEESKRNAEKFSHVPLNTGHWKYKKCDKRMPQEWLADATTLTSKKKTTIGKQSHNTVLERESIATTDE.

Residues 1–39 (MAFNPLLSLLKADAIFLGQLSKSSFCATSRAFSVFYFTR) constitute a mitochondrion transit peptide.

This sequence belongs to the mitochondrion-specific ribosomal protein mS35 family. In terms of assembly, component of the mitochondrial small ribosomal subunit (mt-SSU). Mature yeast 74S mitochondrial ribosomes consist of a small (37S) and a large (54S) subunit. The 37S small subunit contains a 15S ribosomal RNA (15S mt-rRNA) and at least 32 different proteins. The 54S large subunit contains a 21S rRNA (21S mt-rRNA) and at least 45 different proteins.

The protein resides in the mitochondrion. In terms of biological role, component of the mitochondrial ribosome (mitoribosome), a dedicated translation machinery responsible for the synthesis of mitochondrial genome-encoded proteins, including at least some of the essential transmembrane subunits of the mitochondrial respiratory chain. The mitoribosomes are attached to the mitochondrial inner membrane and translation products are cotranslationally integrated into the membrane. This Schizosaccharomyces pombe (strain 972 / ATCC 24843) (Fission yeast) protein is Small ribosomal subunit protein mS35 (rsm24).